A 286-amino-acid chain; its full sequence is Nucleotide-binding protein Tgr7_0722 (286 aa).

Gly-8–Ser-15 lines the ATP pocket. Asp-60–Ser-63 is a GTP binding site.

The protein belongs to the RapZ-like family.

In terms of biological role, displays ATPase and GTPase activities. The polypeptide is Nucleotide-binding protein Tgr7_0722 (Thioalkalivibrio sulfidiphilus (strain HL-EbGR7)).